Consider the following 185-residue polypeptide: Alkyl hydroperoxide reductase AhpD (185 aa).

Catalysis depends on Cys131, which acts as the Proton donor. Residues Cys131 and Cys134 are joined by a disulfide bond. The Cysteine sulfenic acid (-SOH) intermediate role is filled by Cys134.

It belongs to the AhpD family. Homotrimer.

The catalysed reaction is N(6)-[(R)-dihydrolipoyl]-L-lysyl-[lipoyl-carrier protein] + a hydroperoxide = N(6)-[(R)-lipoyl]-L-lysyl-[lipoyl-carrier protein] + an alcohol + H2O. In terms of biological role, antioxidant protein with alkyl hydroperoxidase activity. Required for the reduction of the AhpC active site cysteine residues and for the regeneration of the AhpC enzyme activity. The polypeptide is Alkyl hydroperoxide reductase AhpD (Frankia alni (strain DSM 45986 / CECT 9034 / ACN14a)).